A 519-amino-acid polypeptide reads, in one-letter code: Cyclic AMP-responsive element-binding protein 3-like protein 1 (519 aa).

Residues 1-60 are required for transcriptional activation; the sequence is MDAVLEPFPADRLFPGSSFLDLGDLNESDFLNNAHFPEHLDHFTENMEDFSNDLFSSFFD. Residues 1 to 374 are Cytoplasmic-facing; sequence MDAVLEPFPA…YKMAATQTGT (374 aa). The disordered stretch occupies residues 71–98; it reads LDMELDSPTPGIQAEHSYSLSGDSAPQS. Residues 86 to 97 are compositionally biased toward polar residues; it reads HSYSLSGDSAPQ. A Glycyl lysine isopeptide (Lys-Gly) (interchain with G-Cter in SUMO2) cross-link involves residue lysine 184. The segment at 200–259 is disordered; the sequence is DLVQMPPTPPSSHGSDSDGSQSPRSLPPSSPVRPMARSSTAISTSPLLTAPHKLQGTSGP. Residues 210–223 show a composition bias toward low complexity; that stretch reads SSHGSDSDGSQSPR. Residues 236–246 are compositionally biased toward polar residues; the sequence is RSSTAISTSPL. In terms of domain architecture, bZIP spans 290–353; it reads ALKRVRRKIK…RTLLQQLQKL (64 aa). Positions 292-321 are basic motif; that stretch reads KRVRRKIKNKISAQESRRKKKEYVECLEKK. The interval 332–353 is leucine-zipper; it reads LWKKVETLENANRTLLQQLQKL. The chain crosses the membrane as a helical; Signal-anchor for type II membrane protein span at residues 375–395; it reads CLMVAALCFVLVLGSLVPCLP. Residues 392–395 carry the MBTPS2 recognition motif; the sequence is PCLP. Residues 396-519 lie on the Lumenal side of the membrane; it reads EFSSGSQTVK…LGPNTTIKLS (124 aa). An MBTPS1 recognition motif is present at residues 423–426; the sequence is RSLL. Positions 484-519 are disordered; that stretch reads EAWPKDGGNGTSPDFSHSKEWFHDRDLGPNTTIKLS. N-linked (GlcNAc...) asparagine glycosylation is present at asparagine 492. Over residues 499–510 the composition is skewed to basic and acidic residues; the sequence is SHSKEWFHDRDL. Residue asparagine 513 is glycosylated (N-linked (GlcNAc...) asparagine).

It belongs to the bZIP family. ATF subfamily. In terms of assembly, interacts with SMAD4, the interaction takes place upon TGFB1 induction and SMAD4 acts as a CREB3L1 coactivator to induce the expression of genes involved in assembly of collagen extracellular matrix. In terms of processing, upon ER stress or DNA damage, translocated to the Golgi apparatus, where it is processed by regulated intramembrane proteolysis (RIP) to release the cytosol-facing N-terminal transcription factor domain. The cleavage is performed sequentially by site-1 and site-2 proteases (S1P/MBTPS1 and S2P/MBTPS2). RIP is induced by TGFB1 and ceramide. Post-translationally, N-glycosylated. Ubiquitinated by HRD1/SYVN1; undergoes 'Lys-48'-linked ubiquitination, followed by rapid proteasomal degradation under normal conditions. Upon ER stress, SYVN1 E3 ubiquitin-protein ligase dissociates from its substrate, ubiquitination does not occur and CREB3L1 is stabilized. Expressed in several tissues, with highest levels in pancreas and prostate. Expressed at relatively lower levels in brain.

Its subcellular location is the endoplasmic reticulum membrane. The protein localises to the nucleus. Functionally, precursor of the transcription factor form (Processed cyclic AMP-responsive element-binding protein 3-like protein 1), which is embedded in the endoplasmic reticulum membrane with N-terminal DNA-binding and transcription activation domains oriented toward the cytosolic face of the membrane. In response to ER stress or DNA damage, transported to the Golgi, where it is cleaved in a site-specific manner by resident proteases S1P/MBTPS1 and S2P/MBTPS2. The released N-terminal cytosolic domain is translocated to the nucleus where it activates transcription of specific target genes involved in the cell-cycle progression inhibition. Its function is as follows. Transcription factor involved in cell type specific DNA damage and unfolded protein response (UPR). Binds the DNA consensus sequence 5'-GTGXGCXGC-3'. Plays a critical role in bone formation through the transcription of COL1A1, and possibly COL1A2, and the secretion of bone matrix proteins. Directly binds to the UPR element (UPRE)-like sequence in an osteoblast-specific COL1A1 promoter region and induces its transcription. Does not regulate COL1A1 in other tissues, such as skin. Required to protect astrocytes from ER stress-induced cell death. In astrocytes, binds to the cAMP response element (CRE) of the BiP/HSPA5 promoter and participate in its transcriptional activation. In astrocytes and osteoblasts, upon DNA damage, inhibits cell-cycle progression after G2/M phase by binding to promoters and activating transcription of genes encoding cell-cycle inhibitors, such as p21/CDKN1A. Required for TGFB1 to activate genes involved in the assembly of collagen extracellular matrix. In terms of biological role, (Microbial infection) May play a role in limiting virus spread by inhibiting proliferation of virus-infected cells. Upon infection with diverse DNA and RNA viruses, inhibits cell-cycle progression by binding to promoters and activating transcription of genes encoding cell-cycle inhibitors, such as p21/CDKN1A. The sequence is that of Cyclic AMP-responsive element-binding protein 3-like protein 1 from Homo sapiens (Human).